The primary structure comprises 104 residues: MAIIPDKQDSTVLERKEQKLKPPSMYKVVLLNDDFTPMEFVVMIVQEYFKKDRETATQIMLKVHREGRGVCGVYTRDIASTKVEQVVTHARQAGHPLQCVMEEA.

This sequence belongs to the ClpS family. Binds to the N-terminal domain of the chaperone ClpA.

Functionally, involved in the modulation of the specificity of the ClpAP-mediated ATP-dependent protein degradation. The protein is ATP-dependent Clp protease adapter protein ClpS of Burkholderia thailandensis (strain ATCC 700388 / DSM 13276 / CCUG 48851 / CIP 106301 / E264).